The sequence spans 368 residues: RNA polymerase sigma factor SigA (368 aa).

Over residues 71 to 83 (NEKDSSDTDDKIN) the composition is skewed to basic and acidic residues. The interval 71 to 90 (NEKDSSDTDDKINPNDLSAP) is disordered. Residues 135 to 205 (LAEANLRLVV…TRAIADQART (71 aa)) form a sigma-70 factor domain-2 region. An Interaction with polymerase core subunit RpoC motif is present at residues 159–162 (DLIQ). The interval 214 to 290 (ETINKLIRVQ…DQEAQSPSDH (77 aa)) is sigma-70 factor domain-3. The sigma-70 factor domain-4 stretch occupies residues 303 to 356 (VLDTLTDREENVLRLRFGLDDGRTRTLEEVGKVFGVTRERIRQIEAKALRKLRH). The segment at residues 329 to 348 (LEEVGKVFGVTRERIRQIEA) is a DNA-binding region (H-T-H motif).

The protein belongs to the sigma-70 factor family. RpoD/SigA subfamily. In terms of assembly, interacts transiently with the RNA polymerase catalytic core.

Its subcellular location is the cytoplasm. Its function is as follows. Sigma factors are initiation factors that promote the attachment of RNA polymerase to specific initiation sites and are then released. This sigma factor is the primary sigma factor during exponential growth. This chain is RNA polymerase sigma factor SigA, found in Staphylococcus epidermidis (strain ATCC 35984 / DSM 28319 / BCRC 17069 / CCUG 31568 / BM 3577 / RP62A).